The primary structure comprises 78 residues: uncharacterized protein (78 aa).

The tract at residues 20–78 is disordered; it reads LQDLFPPHFGNEEADEDDEDGDKYGDDDGEFYGDNDGDNDGDNDGVNDGVGDGPPSTLL. The segment covering 31–64 has biased composition (acidic residues); sequence EEADEDDEDGDKYGDDDGEFYGDNDGDNDGDNDG.

This is an uncharacterized protein from Dictyostelium discoideum (Social amoeba).